The sequence spans 147 residues: Zinc finger HIT domain-containing protein 3 (147 aa).

8 residues coordinate Zn(2+): Cys3, Cys6, Cys14, Cys17, Cys22, Cys26, His30, and Cys34. The segment at 3–34 (CVICLEKPKYRCPACRVPYCSVACFRKHKEQC) adopts an HIT-type zinc-finger fold. Residues 45–67 (IRSALPTKTXKPVENKDDDDSIA) are disordered. Ser72 carries the post-translational modification Phosphoserine.

Thyroid receptor interacting proteins (TRIPs) specifically interact with the ligand binding domain of the thyroid receptor (TR). Requires the presence of thyroid hormone for its interaction. Interacts with NUFIP1. Interacts (via HIT-type zinc finger) with the RUVBL1/RUVBL2 complex in the presence of ADP.

The protein resides in the cytoplasm. It is found in the nucleus. This is Zinc finger HIT domain-containing protein 3 (ZNHIT3) from Macaca mulatta (Rhesus macaque).